We begin with the raw amino-acid sequence, 228 residues long: MTVSTSKTPKKNIKYTLTHTLQKWKETLKKITHETLSSIDDSSGSDEKIEALFTVSQPAVVASKGIDRDSGASMSQVGGGVNSTLEMKLTDESEESSSANNTTTTASHTLSNSKKSTQNFENYNVVEERIKLAQKSKAPFCNAEKIWKRRRQLWTQPTEQSESANNDGVTRREIFQAIPQEYYARVYKKLVVDDKPLREPLNLEDALQVINAGWTETRKWANAAKGMP.

Residues 90 to 115 are disordered; it reads TDESEESSSANNTTTTASHTLSNSKK. The segment covering 96–113 has biased composition (low complexity); the sequence is SSSANNTTTTASHTLSNS.

It localises to the cytoplasm. Its subcellular location is the cell cortex. In terms of biological role, deletion results in antifungal drug fluconazole-resistant phenotype. This is an uncharacterized protein from Saccharomyces cerevisiae (strain ATCC 204508 / S288c) (Baker's yeast).